The chain runs to 507 residues: UDP-N-acetylglucosamine 1-carboxyvinyltransferase 1 (507 aa).

Residue 41 to 42 coordinates phosphoenolpyruvate; sequence KN. R112 serves as a coordination point for UDP-N-acetyl-alpha-D-glucosamine. Catalysis depends on C136, which acts as the Proton donor. Position 136 is a 2-(S-cysteinyl)pyruvic acid O-phosphothioketal (C136). Residues 141–145, D328, and L350 contribute to the UDP-N-acetyl-alpha-D-glucosamine site; that span reads RPIDL.

Belongs to the EPSP synthase family. MurA subfamily.

The protein localises to the cytoplasm. The enzyme catalyses phosphoenolpyruvate + UDP-N-acetyl-alpha-D-glucosamine = UDP-N-acetyl-3-O-(1-carboxyvinyl)-alpha-D-glucosamine + phosphate. It participates in cell wall biogenesis; peptidoglycan biosynthesis. Its function is as follows. Cell wall formation. Adds enolpyruvyl to UDP-N-acetylglucosamine. In Legionella pneumophila (strain Lens), this protein is UDP-N-acetylglucosamine 1-carboxyvinyltransferase 1.